Here is a 262-residue protein sequence, read N- to C-terminus: Serine/arginine-rich SC35-like splicing factor SCL30A (262 aa).

2 disordered regions span residues Met-1 to Ser-38 and Glu-115 to Gln-262. Residues Ser-9 and Ser-20 each carry the phosphoserine modification. Residues Thr-37 to Glu-115 enclose the RRM domain. Basic and acidic residues predominate over residues Glu-115–Arg-140. The span at Pro-150 to Ser-161 shows a compositional bias: basic residues. Ser-166, Ser-174, Ser-176, and Ser-178 each carry phosphoserine. Positions Gln-180–Tyr-190 are enriched in basic and acidic residues. A phosphoserine mark is found at Ser-191 and Ser-193. Residues Val-209–Arg-226 are compositionally biased toward basic residues. Over residues Arg-234–Pro-246 the composition is skewed to low complexity. A phosphoserine mark is found at Ser-235, Ser-259, and Ser-261.

Belongs to the splicing factor SR family. SCL subfamily. As to quaternary structure, component of the spliceosome. Interacts with SNRNP35, CYP59 and RS2Z33.

It is found in the nucleus speckle. Functionally, involved in intron recognition and spliceosome assembly. Binds probably to multiple 5'-GAAG-3' repeats found in its third intron, suggesting autoregulation of alternative splicing. May be necessary for accurate splicing of the 3' region of introns. The polypeptide is Serine/arginine-rich SC35-like splicing factor SCL30A (SCL30A) (Arabidopsis thaliana (Mouse-ear cress)).